Here is a 564-residue protein sequence, read N- to C-terminus: M protein, serotype 12 (564 aa).

The N-terminal stretch at 1 to 41 (MAKNTTNRHYSLRKLKTGTASVAVALTVVGAGLVAGQTVRA) is a signal peptide. Positions 44-505 (SDLVAEKQRL…RAGKASDSQT (462 aa)) form a coiled coil. C repeat units follow at residues 285 to 319 (KQLE…EAEL), 327 to 361 (AKVT…VEAA), 363 to 397 (KQLE…EKDL), and 405 to 439 (DKVK…EKAL). Disordered stretches follow at residues 372–391 (SEAS…EAKK) and 404–438 (LDKV…VEKA). Composition is skewed to basic and acidic residues over residues 404–413 (LDKVKEEKQI) and 421–438 (LRRD…VEKA). D repeat units lie at residues 472 to 477 (AKLEAE), 478 to 483 (AKALKE), 486 to 491 (AKQAEE), and 493 to 498 (AKLRAG). The interval 493 to 550 (AKLRAGKASDSQTPDAKPGNKAVPGKGQAPQAGTKPNQNKAPMKETKRQLPSTGETAN) is disordered. An LPXTG sorting signal motif is present at residues 542-546 (LPSTG). Threonine 545 is subject to Pentaglycyl murein peptidoglycan amidated threonine. A propeptide spans 546–564 (GETANPFFTAAALTVMAAA) (removed by sortase).

The protein belongs to the M protein family.

It is found in the secreted. Its subcellular location is the cell wall. This protein is one of the different antigenic serotypes of protein M. Protein M is closely associated with virulence of the bacterium and can render the organism resistant to phagocytosis. The chain is M protein, serotype 12 (emm12) from Streptococcus pyogenes.